We begin with the raw amino-acid sequence, 694 residues long: Elongation factor G (694 aa).

The tr-type G domain maps to 8–282 (KDYRNIGIMA…AVIDYLPSPV (275 aa)). GTP-binding positions include 17-24 (AHIDAGKT), 81-85 (DTPGH), and 135-138 (NKMD).

The protein belongs to the TRAFAC class translation factor GTPase superfamily. Classic translation factor GTPase family. EF-G/EF-2 subfamily.

It is found in the cytoplasm. Functionally, catalyzes the GTP-dependent ribosomal translocation step during translation elongation. During this step, the ribosome changes from the pre-translocational (PRE) to the post-translocational (POST) state as the newly formed A-site-bound peptidyl-tRNA and P-site-bound deacylated tRNA move to the P and E sites, respectively. Catalyzes the coordinated movement of the two tRNA molecules, the mRNA and conformational changes in the ribosome. This Mesomycoplasma hyopneumoniae (strain J / ATCC 25934 / NCTC 10110) (Mycoplasma hyopneumoniae) protein is Elongation factor G.